A 171-amino-acid chain; its full sequence is Probable chorismate pyruvate-lyase (171 aa).

Substrate-binding residues include methionine 36, arginine 78, leucine 116, and glutamate 157.

The protein belongs to the UbiC family.

The protein localises to the cytoplasm. It catalyses the reaction chorismate = 4-hydroxybenzoate + pyruvate. It functions in the pathway cofactor biosynthesis; ubiquinone biosynthesis. In terms of biological role, removes the pyruvyl group from chorismate, with concomitant aromatization of the ring, to provide 4-hydroxybenzoate (4HB) for the ubiquinone pathway. The protein is Probable chorismate pyruvate-lyase of Bartonella bacilliformis (strain ATCC 35685 / KC583 / Herrer 020/F12,63).